A 185-amino-acid polypeptide reads, in one-letter code: Ribosome-recycling factor (185 aa).

The protein belongs to the RRF family.

The protein resides in the cytoplasm. Functionally, responsible for the release of ribosomes from messenger RNA at the termination of protein biosynthesis. May increase the efficiency of translation by recycling ribosomes from one round of translation to another. The sequence is that of Ribosome-recycling factor from Haemophilus influenzae (strain 86-028NP).